The primary structure comprises 433 residues: Glutamate-1-semialdehyde 2,1-aminomutase (433 aa).

Lysine 271 is modified (N6-(pyridoxal phosphate)lysine).

The protein belongs to the class-III pyridoxal-phosphate-dependent aminotransferase family. HemL subfamily. In terms of assembly, homodimer. It depends on pyridoxal 5'-phosphate as a cofactor.

It is found in the cytoplasm. The catalysed reaction is (S)-4-amino-5-oxopentanoate = 5-aminolevulinate. It functions in the pathway porphyrin-containing compound metabolism; protoporphyrin-IX biosynthesis; 5-aminolevulinate from L-glutamyl-tRNA(Glu): step 2/2. The protein operates within porphyrin-containing compound metabolism; chlorophyll biosynthesis. This is Glutamate-1-semialdehyde 2,1-aminomutase from Prochlorococcus marinus (strain SARG / CCMP1375 / SS120).